Reading from the N-terminus, the 100-residue chain is Small ribosomal subunit protein uS14c (100 aa).

Belongs to the universal ribosomal protein uS14 family. As to quaternary structure, part of the 30S ribosomal subunit.

It is found in the plastid. It localises to the chloroplast. Binds 16S rRNA, required for the assembly of 30S particles. The protein is Small ribosomal subunit protein uS14c of Guillardia theta (Cryptophyte).